A 328-amino-acid chain; its full sequence is Chlorate reductase subunit beta (328 aa).

3 4Fe-4S ferredoxin-type domains span residues 6–35 (VAYV…RDGR), 125–156 (NHSF…KRPE), and 158–187 (GIVV…FNLQ). Cys15, Cys18, Cys21, Cys25, Cys134, Cys137, and Cys142 together coordinate [4Fe-4S] cluster. Residues Cys146, Cys167, and Cys173 each coordinate [3Fe-4S] cluster. Residues Cys177, Cys194, Cys197, Cys209, and Cys213 each coordinate [4Fe-4S] cluster.

Heterotrimer of alpha, beta and gamma subunits. [3Fe-4S] cluster is required as a cofactor. [4Fe-4S] cluster serves as cofactor.

It is found in the periplasm. In terms of biological role, electron transfer subunit of the terminal reductase during anaerobic growth on chlorate. This is Chlorate reductase subunit beta (clrB) from Ideonella dechloratans.